The following is a 124-amino-acid chain: Glycine cleavage system H protein (124 aa).

A Lipoyl-binding domain is found at 24–106 (TYTMGITDHA…YDDGWLVKFK (83 aa)). Lys65 bears the N6-lipoyllysine mark.

Belongs to the GcvH family. The glycine cleavage system is composed of four proteins: P, T, L and H. The cofactor is (R)-lipoate.

In terms of biological role, the glycine cleavage system catalyzes the degradation of glycine. The H protein shuttles the methylamine group of glycine from the P protein to the T protein. In Ruthia magnifica subsp. Calyptogena magnifica, this protein is Glycine cleavage system H protein.